Consider the following 76-residue polypeptide: Heat shock factor-binding protein 1 (76 aa).

The protein belongs to the HSBP1 family. As to quaternary structure, homohexamer. Associates with heptad repeats of HSF1 trimers and probably also HSF1 monomers, and with HSP70. Association with HSF1 trimers and HSP70 coincides with attenuation of heat shock response and the conversion of HSF1 trimer to monomer.

The protein localises to the nucleus. Its function is as follows. Negative regulator of the heat shock response. Negatively affects HSF1 DNA-binding activity. May have a role in the suppression of the activation of the stress response during the aging process. The chain is Heat shock factor-binding protein 1 (HSBP1) from Bos taurus (Bovine).